Consider the following 370-residue polypeptide: UDP-3-O-acylglucosamine N-acyltransferase (370 aa).

Catalysis depends on H252, which acts as the Proton acceptor. Positions 350–370 are disordered; it reads AAGRQDGPAANAASSSAGDKA. The segment covering 358–370 has biased composition (low complexity); sequence AANAASSSAGDKA.

This sequence belongs to the transferase hexapeptide repeat family. LpxD subfamily. As to quaternary structure, homotrimer.

It catalyses the reaction a UDP-3-O-[(3R)-3-hydroxyacyl]-alpha-D-glucosamine + a (3R)-hydroxyacyl-[ACP] = a UDP-2-N,3-O-bis[(3R)-3-hydroxyacyl]-alpha-D-glucosamine + holo-[ACP] + H(+). It participates in bacterial outer membrane biogenesis; LPS lipid A biosynthesis. In terms of biological role, catalyzes the N-acylation of UDP-3-O-acylglucosamine using 3-hydroxyacyl-ACP as the acyl donor. Is involved in the biosynthesis of lipid A, a phosphorylated glycolipid that anchors the lipopolysaccharide to the outer membrane of the cell. The polypeptide is UDP-3-O-acylglucosamine N-acyltransferase (Paraburkholderia xenovorans (strain LB400)).